Here is a 418-residue protein sequence, read N- to C-terminus: UDP-N-acetylglucosamine 1-carboxyvinyltransferase (418 aa).

Lys-22 to Asn-23 lines the phosphoenolpyruvate pocket. Arg-93 provides a ligand contact to UDP-N-acetyl-alpha-D-glucosamine. Residue Cys-117 is the Proton donor of the active site. Residue Cys-117 is modified to 2-(S-cysteinyl)pyruvic acid O-phosphothioketal. UDP-N-acetyl-alpha-D-glucosamine is bound by residues Arg-122–Leu-126, Asp-306, and Leu-328.

Belongs to the EPSP synthase family. MurA subfamily.

Its subcellular location is the cytoplasm. It carries out the reaction phosphoenolpyruvate + UDP-N-acetyl-alpha-D-glucosamine = UDP-N-acetyl-3-O-(1-carboxyvinyl)-alpha-D-glucosamine + phosphate. Its pathway is cell wall biogenesis; peptidoglycan biosynthesis. Functionally, cell wall formation. Adds enolpyruvyl to UDP-N-acetylglucosamine. The chain is UDP-N-acetylglucosamine 1-carboxyvinyltransferase from Campylobacter hominis (strain ATCC BAA-381 / DSM 21671 / CCUG 45161 / LMG 19568 / NCTC 13146 / CH001A).